A 407-amino-acid chain; its full sequence is Formate-dependent phosphoribosylglycinamide formyltransferase (407 aa).

N(1)-(5-phospho-beta-D-ribosyl)glycinamide-binding positions include 28–29 (EL) and Glu88. ATP is bound by residues Arg121, Lys162, 167–172 (SSGKGQ), 202–205 (EGFI), and Glu210. The region spanning 126–320 (RLAAEELGVA…EFELHAKAIL (195 aa)) is the ATP-grasp domain. Mg(2+)-binding residues include Glu279 and Glu291. N(1)-(5-phospho-beta-D-ribosyl)glycinamide-binding positions include Asp298, Lys367, and 374–375 (RR).

Belongs to the PurK/PurT family. Homodimer.

It carries out the reaction N(1)-(5-phospho-beta-D-ribosyl)glycinamide + formate + ATP = N(2)-formyl-N(1)-(5-phospho-beta-D-ribosyl)glycinamide + ADP + phosphate + H(+). The protein operates within purine metabolism; IMP biosynthesis via de novo pathway; N(2)-formyl-N(1)-(5-phospho-D-ribosyl)glycinamide from N(1)-(5-phospho-D-ribosyl)glycinamide (formate route): step 1/1. Its function is as follows. Involved in the de novo purine biosynthesis. Catalyzes the transfer of formate to 5-phospho-ribosyl-glycinamide (GAR), producing 5-phospho-ribosyl-N-formylglycinamide (FGAR). Formate is provided by PurU via hydrolysis of 10-formyl-tetrahydrofolate. This is Formate-dependent phosphoribosylglycinamide formyltransferase from Herminiimonas arsenicoxydans.